The following is a 159-amino-acid chain: Succinate dehydrogenase [ubiquinone] cytochrome b small subunit, mitochondrial (159 aa).

The N-terminal 56 residues, 1–56, are a transit peptide targeting the mitochondrion; that stretch reads MAVLLKLGVLCSGQGARALLLRSRVVRPAYVSAFLQDQPTQGRCGTQHIHLSPSHH. The Mitochondrial matrix portion of the chain corresponds to 57-63; sequence SGSKAAS. Residues 64 to 85 traverse the membrane as a helical segment; the sequence is LHWTSERVVSVLLLGLIPAGYL. The Mitochondrial intermembrane portion of the chain corresponds to 86 to 90; it reads NPCSV. Residues 91–111 traverse the membrane as a helical segment; it reads VDYSLAAALTLHSHWGLGQVV. A heme b-binding site is contributed by histidine 102. Residues 112 to 120 are Mitochondrial matrix-facing; that stretch reads TDYVHGDTL. Residue tyrosine 114 coordinates a ubiquinone. A helical membrane pass occupies residues 121 to 142; sequence PKAARAGLLALSALTFAGLCYF. Residues 143–159 lie on the Mitochondrial intermembrane side of the membrane; it reads NYHDVGICRAVAMLWKL.

This sequence belongs to the CybS family. As to quaternary structure, component of complex II composed of four subunits: the flavoprotein (FP) SDHA, iron-sulfur protein (IP) SDHB, and a cytochrome b560 composed of SDHC and SDHD.

It is found in the mitochondrion inner membrane. The protein operates within carbohydrate metabolism; tricarboxylic acid cycle. Functionally, membrane-anchoring subunit of succinate dehydrogenase (SDH) that is involved in complex II of the mitochondrial electron transport chain and is responsible for transferring electrons from succinate to ubiquinone (coenzyme Q). SDH also oxidizes malate to the non-canonical enol form of oxaloacetate, enol-oxaloacetate. Enol-oxaloacetate, which is a potent inhibitor of the succinate dehydrogenase activity, is further isomerized into keto-oxaloacetate. The sequence is that of Succinate dehydrogenase [ubiquinone] cytochrome b small subunit, mitochondrial (Sdhd) from Mus musculus (Mouse).